The following is a 905-amino-acid chain: Alanine--tRNA ligase (905 aa).

Positions 569, 573, 693, and 697 each coordinate Zn(2+).

This sequence belongs to the class-II aminoacyl-tRNA synthetase family. Requires Zn(2+) as cofactor.

It localises to the cytoplasm. The enzyme catalyses tRNA(Ala) + L-alanine + ATP = L-alanyl-tRNA(Ala) + AMP + diphosphate. In terms of biological role, catalyzes the attachment of alanine to tRNA(Ala) in a two-step reaction: alanine is first activated by ATP to form Ala-AMP and then transferred to the acceptor end of tRNA(Ala). Also edits incorrectly charged Ser-tRNA(Ala) and Gly-tRNA(Ala) via its editing domain. This Roseiflexus sp. (strain RS-1) protein is Alanine--tRNA ligase.